The primary structure comprises 262 residues: Acyl-[acyl-carrier-protein]--UDP-N-acetylglucosamine O-acyltransferase (262 aa).

Belongs to the transferase hexapeptide repeat family. LpxA subfamily. As to quaternary structure, homotrimer.

It is found in the cytoplasm. It carries out the reaction a (3R)-hydroxyacyl-[ACP] + UDP-N-acetyl-alpha-D-glucosamine = a UDP-3-O-[(3R)-3-hydroxyacyl]-N-acetyl-alpha-D-glucosamine + holo-[ACP]. It functions in the pathway glycolipid biosynthesis; lipid IV(A) biosynthesis; lipid IV(A) from (3R)-3-hydroxytetradecanoyl-[acyl-carrier-protein] and UDP-N-acetyl-alpha-D-glucosamine: step 1/6. Functionally, involved in the biosynthesis of lipid A, a phosphorylated glycolipid that anchors the lipopolysaccharide to the outer membrane of the cell. The protein is Acyl-[acyl-carrier-protein]--UDP-N-acetylglucosamine O-acyltransferase of Haemophilus influenzae (strain ATCC 51907 / DSM 11121 / KW20 / Rd).